The sequence spans 181 residues: MSVTIVSKRYASALFDIVLASSAVDETEKELNEIKKVLKADQELNDFLVHPKITADKKKHLIAEAFKGVSTHVLHTMYLLIDRGRTNIFSEMTSEFVKLANRTKQIDDAIVYSVKPLSGAEIQSLSEVFAKKAGVTSLRVENVIDKDLIGGVKIRIGNRIYDGSVSGKLSRIERQLAGENR.

This sequence belongs to the ATPase delta chain family. In terms of assembly, F-type ATPases have 2 components, F(1) - the catalytic core - and F(0) - the membrane proton channel. F(1) has five subunits: alpha(3), beta(3), gamma(1), delta(1), epsilon(1). F(0) has three main subunits: a(1), b(2) and c(10-14). The alpha and beta chains form an alternating ring which encloses part of the gamma chain. F(1) is attached to F(0) by a central stalk formed by the gamma and epsilon chains, while a peripheral stalk is formed by the delta and b chains.

Its subcellular location is the cell membrane. F(1)F(0) ATP synthase produces ATP from ADP in the presence of a proton or sodium gradient. F-type ATPases consist of two structural domains, F(1) containing the extramembraneous catalytic core and F(0) containing the membrane proton channel, linked together by a central stalk and a peripheral stalk. During catalysis, ATP synthesis in the catalytic domain of F(1) is coupled via a rotary mechanism of the central stalk subunits to proton translocation. Functionally, this protein is part of the stalk that links CF(0) to CF(1). It either transmits conformational changes from CF(0) to CF(1) or is implicated in proton conduction. This chain is ATP synthase subunit delta, found in Bacillus pumilus (strain SAFR-032).